We begin with the raw amino-acid sequence, 790 residues long: Sodium- and chloride-dependent glycine transporter 2 (790 aa).

The tract at residues M1–L39 is disordered. At M1–D192 the chain is on the cytoplasmic side. 3 helical membrane-spanning segments follow: residues F193 to L213, G220 to L240, and G264 to M284. Positions 199, 201, 202, and 206 each coordinate Na(+). Residues C285–W387 lie on the Extracellular side of the membrane. A disulfide bridge links C304 with C313. 4 N-linked (GlcNAc...) asparagine glycosylation sites follow: N336, N346, N351, and N357. A run of 3 helical transmembrane segments spans residues P388 to I408, V427 to I447, and A463 to S483. Residues S470 and N502 each coordinate Na(+). A run of 6 helical transmembrane segments spans residues A504–L524, W556–I576, L597–G617, S631–L651, I672–Q692, and M708–I728. L567 and D570 together coordinate Na(+). Over K729–C790 the chain is Cytoplasmic.

Belongs to the sodium:neurotransmitter symporter (SNF) (TC 2.A.22) family. SLC6A5 subfamily. As to expression, first expressed in late neurula stages in the anterior spinal cord, where expression intensifies through the tailbud stages, and by hatching, expression is seen in the hindbrain. During late hatching stages, expression extends along most of the length of the spinal cord, mildly intensifies in the hindbrain, and appears in localized regions of the lateral forebrain and medial midbrain. By the swimming tadpole stage, weak expression appears in the anterior hindbrain, with stronger expression in the posterior, postmitotic neurons.

Its subcellular location is the cell membrane. The catalysed reaction is glycine(out) + chloride(out) + 3 Na(+)(out) = glycine(in) + chloride(in) + 3 Na(+)(in). Sodium- and chloride-dependent glycine transporter. Terminates the action of glycine by its high affinity sodium-dependent reuptake into presynaptic terminals. May be responsible for the termination of neurotransmission at strychnine-sensitive glycinergic synapses. The chain is Sodium- and chloride-dependent glycine transporter 2 from Xenopus laevis (African clawed frog).